A 468-amino-acid chain; its full sequence is Interleukin-6 receptor subunit alpha (468 aa).

The N-terminal stretch at 1–19 (MLAVGCALLAALLAAPGAA) is a signal peptide. Residues 20 to 365 (LAPRRCPAQE…VQDSSSVPLP (346 aa)) are Extracellular-facing. 4 disulfides stabilise this stretch: Cys25/Cys193, Cys47/Cys96, Cys121/Cys132, and Cys165/Cys176. The region spanning 26 to 112 (PAQEVARGVL…AGTVHLLVDV (87 aa)) is the Ig-like C2-type domain. 2 N-linked (GlcNAc...) asparagine glycosylation sites follow: Asn55 and Asn93. Fibronectin type-III domains lie at 113 to 217 (PPEE…LQPD) and 218 to 316 (PPAN…TPWT). Residues Asn221 and Asn245 are each glycosylated (N-linked (GlcNAc...) asparagine). A WSXWS motif motif is present at residues 303–307 (WSEWS). Positions 303–328 (WSEWSPEAMGTPWTESRSPPAENEVS) are disordered. Asn350 is a glycosylation site (N-linked (GlcNAc...) asparagine). Thr352 carries an O-linked (GlcNAc) threonine glycan. A helical transmembrane segment spans residues 366–386 (TFLVAGGSLAFGTLLCIAIVL). Over 387–468 (RFKKTWKLRA…ISNTDYFFPR (82 aa)) the chain is Cytoplasmic. A compositionally biased stretch (pro residues) spans 421-433 (TPVLVPLISPPVS). The interval 421–468 (TPVLVPLISPPVSPSSLGSDNTSSHNRPDARDPRSPYDISNTDYFFPR) is disordered. Residues 446–455 (NRPDARDPRS) show a composition bias toward basic and acidic residues. The span at 458 to 468 (DISNTDYFFPR) shows a compositional bias: polar residues.

Belongs to the type I cytokine receptor family. Type 3 subfamily. As to quaternary structure, component of a hexamer of two molecules each of IL6, IL6R and IL6ST; first binds to IL6 to associate with the signaling subunit IL6ST. Interacts (via N-terminal ectodomain) with SORL1; this interaction may affect IL6-binding to IL6R, hence decrease IL6 'classic-signaling'. In terms of assembly, also interacts with SORL1; this interaction leads to soluble IL6R internalization. May form a trimeric complex with the soluble SORL1 ectodomain and circulating IL6 receptor; this interaction might stabilize circulating IL6, hence promote IL6 'trans-signaling,. Post-translationally, a short soluble form is released from the membrane by proteolysis. The sIL6R is formed mostly by limited proteolysis of membrane-bound receptors, a process referred to as ectodomain shedding, but is also directly secreted from the cells after alternative mRNA splicing. mIL6R is cleaved by the proteases ADAM10 and ADAM17. Glycosylated. Glycosylation is dispensable for transport, signaling, and cell-surface turnover. Glycosylation at Asn-55 is a protease-regulatory exosite. Glycosylation is required for ADAM17-mediated proteolysis. Expressed in peripheral blood mononuclear cells and weakly found in urine and serum. 1%-20% of the total sIL6R in plasma is generated by alternative splicing.

The protein resides in the cell membrane. It is found in the secreted. Its activity is regulated as follows. Classic and trans-signaling are both inhibited by tocilizumab, a humanized monoclonal antibody that blocks interleukin IL6R signaling. In terms of biological role, part of the receptor for interleukin 6. Binds to IL6 with low affinity, but does not transduce a signal. Signal activation necessitate an association with IL6ST. Activation leads to the regulation of the immune response, acute-phase reactions and hematopoiesis. The interaction with membrane-bound IL6R and IL6ST stimulates 'classic signaling', the restricted expression of the IL6R limits classic IL6 signaling to only a few tissues such as the liver and some cells of the immune system. Whereas the binding of IL6 and soluble IL6R to IL6ST stimulates 'trans-signaling'. Alternatively, 'cluster signaling' occurs when membrane-bound IL6:IL6R complexes on transmitter cells activate IL6ST receptors on neighboring receiver cells. Its function is as follows. Signaling via the membrane-bound IL6R is mostly regenerative and anti-inflammatory. Drives naive CD4(+) T cells to the Th17 lineage, through 'cluster signaling' by dendritic cells. Soluble form of IL6 receptor (sIL6R) that acts as an agonist of IL6 activity. The IL6:sIL6R complex (hyper-IL6) binds to IL6ST/gp130 on cell surfaces and induces signaling also on cells that do not express membrane-bound IL6R in a process called IL6 'trans-signaling'. sIL6R is causative for the pro-inflammatory properties of IL6 and an important player in the development of chronic inflammatory diseases. In complex with IL6, is required for induction of VEGF production. Plays a protective role during liver injury, being required for maintenance of tissue regeneration. 'Trans-signaling' in central nervous system regulates energy and glucose homeostasis. This Homo sapiens (Human) protein is Interleukin-6 receptor subunit alpha.